The sequence spans 155 residues: UPF0178 protein ACIAD2644 (155 aa).

The interval 120–155 is disordered; it reads GAGVQTGGPPPISERDKREFSSALDQTILKQKRKTA.

The protein belongs to the UPF0178 family.

This Acinetobacter baylyi (strain ATCC 33305 / BD413 / ADP1) protein is UPF0178 protein ACIAD2644.